We begin with the raw amino-acid sequence, 69 residues long: Cytochrome c oxidase subunit 8A, mitochondrial (69 aa).

The N-terminal 25 residues, 1–25, are a transit peptide targeting the mitochondrion; sequence MSVLTPLLLRGLTGSARRLPVPRAK. Residues 2 to 19 carry the SIFI-degron motif; it reads SVLTPLLLRGLTGSARRL. At 26–36 the chain is on the mitochondrial matrix side; sequence IHSLPPEEKLG. The helical transmembrane segment at 37-60 threads the bilayer; that stretch reads IMELAVGLTSCFVTFLLPAGWILS. Topologically, residues 61–69 are mitochondrial intermembrane; sequence HLETYRRPE.

This sequence belongs to the cytochrome c oxidase VIII family. As to quaternary structure, component of the cytochrome c oxidase (complex IV, CIV), a multisubunit enzyme composed of 14 subunits. The complex is composed of a catalytic core of 3 subunits MT-CO1, MT-CO2 and MT-CO3, encoded in the mitochondrial DNA, and 11 supernumerary subunits COX4I, COX5A, COX5B, COX6A, COX6B, COX6C, COX7A, COX7B, COX7C, COX8 and NDUFA4, which are encoded in the nuclear genome. The complex exists as a monomer or a dimer and forms supercomplexes (SCs) in the inner mitochondrial membrane with NADH-ubiquinone oxidoreductase (complex I, CI) and ubiquinol-cytochrome c oxidoreductase (cytochrome b-c1 complex, complex III, CIII), resulting in different assemblies (supercomplex SCI(1)III(2)IV(1) and megacomplex MCI(2)III(2)IV(2)). Post-translationally, in response to mitochondrial stress, the precursor protein is ubiquitinated by the SIFI complex in the cytoplasm before mitochondrial import, leading to its degradation. Within the SIFI complex, UBR4 initiates ubiquitin chain that are further elongated or branched by KCMF1.

The protein localises to the mitochondrion inner membrane. Its pathway is energy metabolism; oxidative phosphorylation. In terms of biological role, component of the cytochrome c oxidase, the last enzyme in the mitochondrial electron transport chain which drives oxidative phosphorylation. The respiratory chain contains 3 multisubunit complexes succinate dehydrogenase (complex II, CII), ubiquinol-cytochrome c oxidoreductase (cytochrome b-c1 complex, complex III, CIII) and cytochrome c oxidase (complex IV, CIV), that cooperate to transfer electrons derived from NADH and succinate to molecular oxygen, creating an electrochemical gradient over the inner membrane that drives transmembrane transport and the ATP synthase. Cytochrome c oxidase is the component of the respiratory chain that catalyzes the reduction of oxygen to water. Electrons originating from reduced cytochrome c in the intermembrane space (IMS) are transferred via the dinuclear copper A center (CU(A)) of subunit 2 and heme A of subunit 1 to the active site in subunit 1, a binuclear center (BNC) formed by heme A3 and copper B (CU(B)). The BNC reduces molecular oxygen to 2 water molecules using 4 electrons from cytochrome c in the IMS and 4 protons from the mitochondrial matrix. This chain is Cytochrome c oxidase subunit 8A, mitochondrial (COX8A), found in Hylobates agilis (Agile gibbon).